Consider the following 42-residue polypeptide: Photosystem I reaction center subunit IX (42 aa).

A helical membrane pass occupies residues 7 to 27; it reads YLSAAPVLSTLWLGALAALLI.

The protein belongs to the PsaJ family.

It is found in the plastid membrane. Functionally, may help in the organization of the PsaE and PsaF subunits. This Cuscuta reflexa (Southern Asian dodder) protein is Photosystem I reaction center subunit IX.